The primary structure comprises 1829 residues: Protein TIC 214 (1829 aa).

6 consecutive transmembrane segments (helical) span residues 18-38 (IINSVVVVGLYYGFMTTFSIG), 67-87 (FIAGQLMMFISIYYAPLHLAL), 90-110 (PHTITVLALPYLLFHFFWNNP), 127-147 (LSIQCVFLNNLIFQLFNHFLL), 174-194 (FVGWLIGHILFMKWVGLVLVW), and 224-244 (IFSILLFITCIYYLGRIPSPI). Residues 260 to 272 (RDVEIEKTFERGG) are compositionally biased toward basic and acidic residues. Residues 260–301 (RDVEIEKTFERGGTKQGQEVSAEEDPSPSLFSEEKEDPDKIE) form a disordered region.

It belongs to the TIC214 family. In terms of assembly, part of the Tic complex.

Its subcellular location is the plastid. It is found in the chloroplast inner membrane. Functionally, involved in protein precursor import into chloroplasts. May be part of an intermediate translocation complex acting as a protein-conducting channel at the inner envelope. The sequence is that of Protein TIC 214 from Citrus sinensis (Sweet orange).